The following is a 349-amino-acid chain: Ribosomal RNA small subunit methyltransferase H (349 aa).

Residues 34 to 36 (GGH), Asp-54, Phe-81, Asp-102, and Gln-109 each bind S-adenosyl-L-methionine. A disordered region spans residues 328–349 (SRTGSVQHGQAKHKGVVQRGGS).

Belongs to the methyltransferase superfamily. RsmH family.

It localises to the cytoplasm. The catalysed reaction is cytidine(1402) in 16S rRNA + S-adenosyl-L-methionine = N(4)-methylcytidine(1402) in 16S rRNA + S-adenosyl-L-homocysteine + H(+). In terms of biological role, specifically methylates the N4 position of cytidine in position 1402 (C1402) of 16S rRNA. The protein is Ribosomal RNA small subunit methyltransferase H of Dehalococcoides mccartyi (strain ATCC BAA-2100 / JCM 16839 / KCTC 5957 / BAV1).